The sequence spans 248 residues: tRNA pseudouridine synthase A (248 aa).

Asp-53 serves as the catalytic Nucleophile. Tyr-111 serves as a coordination point for substrate.

The protein belongs to the tRNA pseudouridine synthase TruA family. In terms of assembly, homodimer.

The catalysed reaction is uridine(38/39/40) in tRNA = pseudouridine(38/39/40) in tRNA. Functionally, formation of pseudouridine at positions 38, 39 and 40 in the anticodon stem and loop of transfer RNAs. The polypeptide is tRNA pseudouridine synthase A (Listeria monocytogenes serotype 4a (strain HCC23)).